A 577-amino-acid chain; its full sequence is Protein downstream neighbor of son homolog (577 aa).

2 disordered regions span residues 1–67 and 328–382; these read MAEL…KRRN and FTQP…LEEM. Positions 362–375 are enriched in acidic residues; sequence ETDEVSDESDEDES.

The protein belongs to the DONSON family. Component of the replisome complex.

Its subcellular location is the nucleus. In terms of biological role, replisome component that maintains genome stability by protecting stalled or damaged replication forks. After the induction of replication stress, required for the stabilization of stalled replication forks, the efficient activation of the intra-S-phase and G/2M cell-cycle checkpoints and the maintenance of genome stability. The protein is Protein downstream neighbor of son homolog of Xenopus tropicalis (Western clawed frog).